The sequence spans 118 residues: Protein TusC (118 aa).

The protein belongs to the DsrF/TusC family. Heterohexamer, formed by a dimer of trimers. The hexameric TusBCD complex contains 2 copies each of TusB, TusC and TusD. The TusBCD complex interacts with TusE.

The protein resides in the cytoplasm. Its function is as follows. Part of a sulfur-relay system required for 2-thiolation of 5-methylaminomethyl-2-thiouridine (mnm(5)s(2)U) at tRNA wobble positions. This Salmonella typhimurium (strain LT2 / SGSC1412 / ATCC 700720) protein is Protein TusC.